We begin with the raw amino-acid sequence, 144 residues long: Transcriptional regulator SlyA (144 aa).

Residues 2 to 135 (ESPLGSDLAR…LIKLIAKLEH (134 aa)) form the HTH marR-type domain. Positions 49 to 72 (QIQLAKAIGIEQPSLVRTLDQLED) form a DNA-binding region, H-T-H motif.

Belongs to the SlyA family. In terms of assembly, homodimer.

The protein localises to the cytoplasm. Its function is as follows. Transcription regulator that can specifically activate or repress expression of target genes. Required for virulence and survival in the macrophage environment. Probably activates the transcription of ssrB. Independently of ssrB activation, capable of stimulating the expression of virulence genes found on pathogenicity island 2 (SPI2). Probably activates expression of ispA, xseB genes, and of omp operon. This chain is Transcriptional regulator SlyA, found in Salmonella typhimurium (strain LT2 / SGSC1412 / ATCC 700720).